The primary structure comprises 259 residues: Sesquipedalian-2 (259 aa).

The 105-residue stretch at 17 to 121 folds into the PH domain; it reads PADHTGFLRS…WVKALSRASF (105 aa). The stretch at 124 to 150 forms a coiled coil; it reads MRLVVRELESQLQDARQSLALHRCASQ. The tract at residues 155-178 is disordered; it reads SCSKSQAPDHRAPDPENGHFLPRD. Residues 161 to 178 show a composition bias toward basic and acidic residues; that stretch reads APDHRAPDPENGHFLPRD. The F&amp;H motif lies at 223 to 235; it reads CFSTLHDWYGKEI.

This sequence belongs to the sesquipedalian family. Forms homodimers and heterodimers with PHETA1. Interacts with OCRL and INPP5B.

Its subcellular location is the early endosome. The protein localises to the recycling endosome. It localises to the golgi apparatus. It is found in the trans-Golgi network. The protein resides in the cytoplasmic vesicle. Its subcellular location is the clathrin-coated vesicle. Functionally, plays a role in endocytic trafficking. Required for receptor recycling from endosomes, both to the trans-Golgi network and the plasma membrane. This Mus musculus (Mouse) protein is Sesquipedalian-2.